We begin with the raw amino-acid sequence, 698 residues long: SPX domain-containing membrane protein OsI_21475 (698 aa).

Residues 2–145 (VNFGKKLMAD…GYRFTDYYVT (144 aa)) form the SPX domain. 6 helical membrane passes run 248–268 (FMSL…TYII), 279–299 (LGAA…AQIF), 316–336 (LIFS…AYDM), 339–357 (LTVL…ARAV), 376–396 (AGFV…AGLL), and 412–432 (LPGW…WISF). The disordered stretch occupies residues 467-495 (LLRDSSKKDEDDDEEVDDSEEGTHDSRKP). Over residues 476–486 (EDDDEEVDDSE) the composition is skewed to acidic residues. The next 5 membrane-spanning stretches (helical) occupy residues 514–534 (LLIY…SSVI), 545–565 (AVAI…AVVG), 577–597 (LLMV…KITS), 605–625 (VVSA…NLSL), and 671–691 (LLNV…ASTF).

This sequence belongs to the major facilitator superfamily.

The protein localises to the membrane. This chain is SPX domain-containing membrane protein OsI_21475, found in Oryza sativa subsp. indica (Rice).